The sequence spans 219 residues: LHFPL tetraspan subfamily member 5 protein (219 aa).

Topologically, residues 1-24 are cytoplasmic; sequence MVKLLPAQEAAKIYHTNYVRNSRA. A helical membrane pass occupies residues 25–45; sequence VGVMWGTLTICFSVLVMALFI. The Extracellular segment spans residues 46-98; sequence QPYWIGDSVSTPQAGYFGLFSYCVGNVLSSELICKGGPLDFSSIPSRAFKTAM. The helical transmembrane segment at 99–119 threads the bilayer; sequence FFVALAMFLIIGSIICFSLFF. Residues 120–128 lie on the Cytoplasmic side of the membrane; it reads VCNTATVYK. The chain crosses the membrane as a helical span at residues 129-149; the sequence is ICAWMQLAAATGLMIGCLVYP. At 150 to 178 the chain is on the extracellular side; that stretch reads DGWDSSEVRRMCGEQTGKYTLGHCTIRWA. The chain crosses the membrane as a helical span at residues 179-199; it reads FMLAILSIGDALILSFLAFVL. At 200 to 219 the chain is on the cytoplasmic side; it reads GYRQDKLLPDDYKADGNEEV.

It belongs to the LHFP family. In terms of assembly, forms the MET channel composed of TMC (TMC1 or TMC2), TMIE, TOMT, CIB (CIB2 or CIB3), LHPL5 and PCDH15. Interaction with PCDH15 is required for efficient localization to hair bundles.

The protein resides in the cell membrane. Auxiliary subunit of the mechanotransducer (MET) non-specific cation channel complex located at the tips of the shorter stereocilia of cochlear hair cells and that mediates sensory transduction in the auditory system. The MET complex is composed of two dimeric pore-forming ion-conducting transmembrane TMC (TMC1 or TMC2) subunits, and aided by several auxiliary proteins including LHFPL5, TMIE, CIB2/3 and TOMT, and the tip-link PCDH15. Functionally couples PCDH15 to the transduction channel. This chain is LHFPL tetraspan subfamily member 5 protein, found in Rattus norvegicus (Rat).